The following is a 55-amino-acid chain: Large ribosomal subunit protein bL32c (55 aa).

It belongs to the bacterial ribosomal protein bL32 family.

Its subcellular location is the plastid. The protein localises to the chloroplast. The protein is Large ribosomal subunit protein bL32c of Nicotiana sylvestris (Wood tobacco).